Here is a 227-residue protein sequence, read N- to C-terminus: ATP-dependent Clp protease proteolytic subunit (227 aa).

Ser123 acts as the Nucleophile in catalysis. The active site involves His148.

The protein belongs to the peptidase S14 family. As to quaternary structure, fourteen ClpP subunits assemble into 2 heptameric rings which stack back to back to give a disk-like structure with a central cavity, resembling the structure of eukaryotic proteasomes.

Its subcellular location is the cytoplasm. It carries out the reaction Hydrolysis of proteins to small peptides in the presence of ATP and magnesium. alpha-casein is the usual test substrate. In the absence of ATP, only oligopeptides shorter than five residues are hydrolyzed (such as succinyl-Leu-Tyr-|-NHMec, and Leu-Tyr-Leu-|-Tyr-Trp, in which cleavage of the -Tyr-|-Leu- and -Tyr-|-Trp bonds also occurs).. In terms of biological role, cleaves peptides in various proteins in a process that requires ATP hydrolysis. Has a chymotrypsin-like activity. Plays a major role in the degradation of misfolded proteins. The polypeptide is ATP-dependent Clp protease proteolytic subunit (Chlorobium phaeobacteroides (strain DSM 266 / SMG 266 / 2430)).